The sequence spans 41 residues: GTPCKCHGYIGVYWFMLAGCPNGYGYNLSCPYFLGICCVKK.

Disulfide bonds link Cys4–Cys37, Cys6–Cys30, and Cys20–Cys38.

The protein belongs to the sea anemone type 3 (BDS) potassium channel toxin family.

The protein localises to the secreted. Its subcellular location is the nematocyst. Remarkably non-selective toxin, with activity on many different ion channels. Weakly and reversibly inhibits rat and human homomeric ASIC1 (isoform ASIC1a) (IC(50)=4.8 uM, and IC(50)=14.6 uM), and ASIC3 (IC(50)=15.9 uM). Molecular modeling interaction with ASIC1a suggests that this peptide hinders the collapse of acidic pockets and stabilizes nonconducting channels state. It activates several potassium channels including Kv1.1/KCNA1, Kv1.2/KCNA2, and drosophila Shaker IR. It moderately to potently inhibits potassium channels including Kv1.3/KCNA3, Kv1.4/KCNA4, Kv1.5/KCNA5, Kv1.6/KCNA6, Kv2.1/KCNB1, Kv4.2/KCND2, Kv7.1/KCNQ1, Kv7.2/Kv7.3 (KCNQ2/KCNQ3), Kv7.4/KCNQ4, hERG/KCNH2, and C.elegans QKT1. On sodium channels, it moderately to potently inhibits Nav1.1/SCN1A, Nav1.2/SCN2A, Nav1.3/SCN3A, Nav1.4/SCN4A, Nav1.5/SCN5A, Nav1.6/SCN8A, Nav1.7/SCN9A, Nav1.8/SCN10A, and B.germanica BgNav. It also moderately to potently inhibits Cav3.1/CACNA1G, Cav3.2/CACNA1H, and Cav3.3/CACNA1I. Significant shifts in the voltage-current relationship are observed on Kv and Nav, depending on the channel isoform, whereas the toxin does not seem to modulate the voltage-sensor domains of Cav channels, acting mainly as a pore blocker. Does not activate nicotinic acetylcholine receptors (nAChR), but potentiates ACh-elicited current of human alpha-7/CHRNA7 nAChR. Is also able to bind T.californica muscle-type nAChRs. In vivo, causes an excitatory effect in mice behavior. Also shows antihyperalgesic and analgesic activity in the acid-induced muscle pain mice model, and weak anti-inflammatory effect in models of acute local inflammation. The polypeptide is Pi-stichotoxin-Hcr5b (Radianthus crispa (Leathery sea anemone)).